The following is a 432-amino-acid chain: Serine/threonine-protein kinase stk11 (432 aa).

A Protein kinase domain is found at 52 to 312; that stretch reads YLMGDLLGEG…IQQIRQHNWF (261 aa). Residues 58-66 and Lys81 contribute to the ATP site; that span reads LGEGSYGKV. The Proton acceptor role is filled by Asp179. Position 192 is a phosphothreonine; by autocatalysis (Thr192). A disordered region spans residues 398–432; it reads TESQLKTERRVSSSSQRKASTTGSKVRKLSACKQQ. Residues 409–421 show a composition bias toward polar residues; that stretch reads SSSSQRKASTTGS. Residues 422–432 are compositionally biased toward basic residues; sequence KVRKLSACKQQ. Ser427 carries the post-translational modification Phosphoserine; by PKA.

The protein belongs to the protein kinase superfamily. CAMK Ser/Thr protein kinase family. LKB1 subfamily. In terms of assembly, catalytic component of a trimeric complex composed of STK11/LKB1, STRAD (STRADA or STRADB) and CAB39/MO25 (CAB39/MO25alpha or CAB39L/MO25beta). It depends on Mg(2+) as a cofactor. Mn(2+) is required as a cofactor. Phosphorylated by a cAMP-dependent protein kinase. Autophosphorylated in a reaction that prefers Mn(2+) to Mg(2+). Oocytes, eggs and early embryos.

The protein resides in the nucleus. It localises to the cytoplasm. The catalysed reaction is L-seryl-[protein] + ATP = O-phospho-L-seryl-[protein] + ADP + H(+). It catalyses the reaction L-threonyl-[protein] + ATP = O-phospho-L-threonyl-[protein] + ADP + H(+). Tumor suppressor serine/threonine-protein kinase that controls the activity of AMP-activated protein kinase (AMPK) family members, thereby playing a role in various processes such as cell metabolism, cell polarity, apoptosis and DNA damage response. Acts by phosphorylating the T-loop of AMPK family proteins, leading to promote their activity. The sequence is that of Serine/threonine-protein kinase stk11 from Xenopus laevis (African clawed frog).